A 131-amino-acid polypeptide reads, in one-letter code: Ribosome-binding factor A (131 aa).

This sequence belongs to the RbfA family. As to quaternary structure, monomer. Binds 30S ribosomal subunits, but not 50S ribosomal subunits or 70S ribosomes.

The protein resides in the cytoplasm. One of several proteins that assist in the late maturation steps of the functional core of the 30S ribosomal subunit. Associates with free 30S ribosomal subunits (but not with 30S subunits that are part of 70S ribosomes or polysomes). Required for efficient processing of 16S rRNA. May interact with the 5'-terminal helix region of 16S rRNA. The protein is Ribosome-binding factor A of Pseudomonas fluorescens (strain SBW25).